The sequence spans 130 residues: Protein ApaG (130 aa).

Residues 3–127 form the ApaG domain; that stretch reads SAMTRSINIL…FSLDSPHAKR (125 aa).

This chain is Protein ApaG, found in Parvibaculum lavamentivorans (strain DS-1 / DSM 13023 / NCIMB 13966).